Here is a 100-residue protein sequence, read N- to C-terminus: Large ribosomal subunit protein uL23 (100 aa).

This sequence belongs to the universal ribosomal protein uL23 family. In terms of assembly, part of the 50S ribosomal subunit. Contacts protein L29, and trigger factor when it is bound to the ribosome.

One of the early assembly proteins it binds 23S rRNA. One of the proteins that surrounds the polypeptide exit tunnel on the outside of the ribosome. Forms the main docking site for trigger factor binding to the ribosome. This Prochlorococcus marinus (strain MIT 9312) protein is Large ribosomal subunit protein uL23.